The chain runs to 206 residues: MKIVIASCHGYKIRETKTFLKQLGSFDIFSLTDFPNYSAPKEIGCLPEENALAKGLHAAKELNSWVIADDTMLMVPALNGLPGKLSATFAGEDACDKDHRKKLLQEMQSLESIVDRSAYFECCIVLASPEGKFFKARGICEGYISNQEKGSSGFGYDSLFLKYDYKQTFAELSEDVKNQVSHRAKALQKLAPYLQNLLEKQLVSRN.

Substrate is bound at residue 7–12; that stretch reads SCHGYK. Aspartate 70 acts as the Proton acceptor in catalysis. Aspartate 70 serves as a coordination point for Mg(2+). Substrate is bound by residues threonine 71, 154-157, lysine 177, and 182-183; these read FGYD and HR.

It belongs to the HAM1 NTPase family. In terms of assembly, homodimer. Mg(2+) is required as a cofactor.

It catalyses the reaction XTP + H2O = XMP + diphosphate + H(+). It carries out the reaction dITP + H2O = dIMP + diphosphate + H(+). The catalysed reaction is ITP + H2O = IMP + diphosphate + H(+). Functionally, pyrophosphatase that catalyzes the hydrolysis of nucleoside triphosphates to their monophosphate derivatives, with a high preference for the non-canonical purine nucleotides XTP (xanthosine triphosphate), dITP (deoxyinosine triphosphate) and ITP. Seems to function as a house-cleaning enzyme that removes non-canonical purine nucleotides from the nucleotide pool, thus preventing their incorporation into DNA/RNA and avoiding chromosomal lesions. This Chlamydia caviae (strain ATCC VR-813 / DSM 19441 / 03DC25 / GPIC) (Chlamydophila caviae) protein is dITP/XTP pyrophosphatase.